The sequence spans 101 residues: uncharacterized protein (101 aa).

Basic and acidic residues predominate over residues 1–11 (MSDEGYRELVE). A disordered region spans residues 1–26 (MSDEGYRELVESKSAPTTPGPWSPDR).

This is an uncharacterized protein from Torque teno canis virus (isolate Cf-TTV10).